A 216-amino-acid chain; its full sequence is Protein Syd (216 aa).

Belongs to the Syd family.

It localises to the cell inner membrane. Interacts with the SecY protein in vivo. May bind preferentially to an uncomplexed state of SecY, thus functioning either as a chelating agent for excess SecY in the cell or as a regulatory factor that negatively controls the translocase function. The sequence is that of Protein Syd from Shewanella baltica (strain OS195).